We begin with the raw amino-acid sequence, 1605 residues long: Zinc finger protein jing homolog (1605 aa).

A compositionally biased stretch (polar residues) spans 1–15 (MQHQSLSVRNSSGIS). Disordered stretches follow at residues 1-28 (MQHQ…VRSS), 60-117 (QWPW…QQSN), 359-388 (TRKV…TSDP), 441-468 (QQHQ…TQAQ), 856-877 (STTS…PPKL), 917-947 (TKAT…ASCT), and 991-1213 (NDSG…TDFL). Low complexity predominate over residues 64 to 117 (NTSNNTNATNSNNVQSNNNSSTATSNSSTNSNNSPAVNTPTTQNQSQPTTQQSN). Residues 991–1000 (NDSGIVANSS) are compositionally biased toward polar residues. Positions 1021 to 1030 (PQKKDEESRQ) are enriched in basic and acidic residues. Pro residues predominate over residues 1035–1049 (SPVPSPSPLSEPPVI). 2 stretches are compositionally biased toward acidic residues: residues 1053–1090 (SEPE…DEPH) and 1099–1110 (SSEAVELPELED). Pro residues predominate over residues 1112–1126 (QPSPPLPCELPPPPT). Over residues 1135 to 1149 (LSLPPSQKSPKSLLL) the composition is skewed to low complexity. Residues 1165 to 1201 (QESMSSDQDYSNQSPLDESSPTGSAEPSESQRSTTPV) show a composition bias toward polar residues. The C2H2-type 1 zinc-finger motif lies at 1260-1285 (GVCYWSNCDAQFDTSSKLLDHLQIQH). The segment at 1293-1320 (FACLWDGCKVHNKESCSRRWLERHVLSH) adopts a C2H2-type 2; degenerate zinc-finger fold. A C2H2-type 3 zinc finger spans residues 1326–1350 (HKCIVAGCGMRFGSQLALEKHVNHH). Disordered stretches follow at residues 1352 to 1371 (NNTD…LPKV) and 1511 to 1605 (CSRS…SSTS). Composition is skewed to low complexity over residues 1511–1537 (CSRS…SLIS) and 1556–1605 (KQSY…SSTS).

Belongs to the AEBP2/jing C2H2-type zinc-finger family.

Its subcellular location is the nucleus. Functionally, may functionally interact with Polycomb group (PcG) and trithorax group (trxG) proteins to repress transcription. The polypeptide is Zinc finger protein jing homolog (Aedes aegypti (Yellowfever mosquito)).